The chain runs to 141 residues: Pancreatic progenitor cell differentiation and proliferation factor-like protein (141 aa).

The segment at 72–141 (DQSACGGNGP…GAPKDTNSPQ (70 aa)) is disordered. Over residues 95-105 (SLLQQEESQLL) the composition is skewed to low complexity. Positions 112–122 (GTVNRFRNSQT) are enriched in polar residues.

The protein belongs to the PPDPF family.

The sequence is that of Pancreatic progenitor cell differentiation and proliferation factor-like protein from Bos taurus (Bovine).